A 391-amino-acid polypeptide reads, in one-letter code: Alkanesulfonate monooxygenase (391 aa).

The protein belongs to the SsuD family.

The enzyme catalyses an alkanesulfonate + FMNH2 + O2 = an aldehyde + FMN + sulfite + H2O + 2 H(+). Functionally, catalyzes the desulfonation of aliphatic sulfonates. This Rhodopseudomonas palustris (strain TIE-1) protein is Alkanesulfonate monooxygenase.